We begin with the raw amino-acid sequence, 314 residues long: Glycine--tRNA ligase alpha subunit (314 aa).

The protein belongs to the class-II aminoacyl-tRNA synthetase family. Tetramer of two alpha and two beta subunits.

The protein localises to the cytoplasm. The enzyme catalyses tRNA(Gly) + glycine + ATP = glycyl-tRNA(Gly) + AMP + diphosphate. This is Glycine--tRNA ligase alpha subunit from Leuconostoc citreum (strain KM20).